The primary structure comprises 257 residues: Phosphonates import ATP-binding protein PhnC (257 aa).

In terms of domain architecture, ABC transporter spans 4–248 (IEFKDVSKVY…VFNHIYGRSI (245 aa)).

This sequence belongs to the ABC transporter superfamily. Phosphonates importer (TC 3.A.1.9.1) family. The complex is composed of two ATP-binding proteins (PhnC), two transmembrane proteins (PhnE) and a solute-binding protein (PhnD).

Its subcellular location is the cell membrane. The catalysed reaction is phosphonate(out) + ATP + H2O = phosphonate(in) + ADP + phosphate + H(+). Its function is as follows. Part of the ABC transporter complex PhnCDE involved in phosphonates import. Responsible for energy coupling to the transport system. The sequence is that of Phosphonates import ATP-binding protein PhnC from Staphylococcus epidermidis (strain ATCC 35984 / DSM 28319 / BCRC 17069 / CCUG 31568 / BM 3577 / RP62A).